A 220-amino-acid polypeptide reads, in one-letter code: Ribonuclease HII (220 aa).

The 219-residue stretch at 1 to 219 (MMIAGIDEAG…VENIREELKK (219 aa)) folds into the RNase H type-2 domain. Residues aspartate 7, glutamate 8, and aspartate 105 each contribute to the a divalent metal cation site.

This sequence belongs to the RNase HII family. Requires Mn(2+) as cofactor. Mg(2+) is required as a cofactor.

It is found in the cytoplasm. It catalyses the reaction Endonucleolytic cleavage to 5'-phosphomonoester.. Its function is as follows. Endonuclease that specifically degrades the RNA of RNA-DNA hybrids. The polypeptide is Ribonuclease HII (Methanosarcina mazei (strain ATCC BAA-159 / DSM 3647 / Goe1 / Go1 / JCM 11833 / OCM 88) (Methanosarcina frisia)).